The following is a 191-amino-acid chain: Xanthine phosphoribosyltransferase (191 aa).

Xanthine is bound by residues Leu-20 and Asn-27. 128 to 132 (ANGQA) is a 5-phospho-alpha-D-ribose 1-diphosphate binding site. Residue Lys-156 participates in xanthine binding.

This sequence belongs to the purine/pyrimidine phosphoribosyltransferase family. Xpt subfamily. Homodimer.

Its subcellular location is the cytoplasm. It carries out the reaction XMP + diphosphate = xanthine + 5-phospho-alpha-D-ribose 1-diphosphate. The protein operates within purine metabolism; XMP biosynthesis via salvage pathway; XMP from xanthine: step 1/1. Its function is as follows. Converts the preformed base xanthine, a product of nucleic acid breakdown, to xanthosine 5'-monophosphate (XMP), so it can be reused for RNA or DNA synthesis. This Limosilactobacillus reuteri (strain DSM 20016) (Lactobacillus reuteri) protein is Xanthine phosphoribosyltransferase.